We begin with the raw amino-acid sequence, 81 residues long: Cortexin-2 (81 aa).

A helical membrane pass occupies residues 29–49 (TGFAFVGILCIFLGLLIIRCF).

This sequence belongs to the cortexin family.

The protein localises to the membrane. In Mus musculus (Mouse), this protein is Cortexin-2 (Ctxn2).